The sequence spans 542 residues: Mitochondrial distribution and morphology protein 34 (542 aa).

The SMP-LTD domain occupies 1 to 216 (MSFRFNKGAF…LPSVIFSMSQ (216 aa)). 2 disordered regions span residues 27–58 (LNSK…TRGP) and 372–435 (SSGD…TTAV). Positions 31–48 (TQSSSQTAPANTTNSAAT) are enriched in low complexity. Basic and acidic residues predominate over residues 49 to 58 (DEVKQETRGP). The segment covering 379-394 (IRRRKIKMGKKSKSKK) has biased composition (basic residues). Residues 403–414 (SSPTVVMPSSPS) show a composition bias toward low complexity.

The protein belongs to the MDM34 family. Component of the ER-mitochondria encounter structure (ERMES) or MDM complex, composed of MMM1, MDM10, MDM12 and MDM34.

The protein localises to the mitochondrion outer membrane. In terms of biological role, component of the ERMES/MDM complex, which serves as a molecular tether to connect the endoplasmic reticulum (ER) and mitochondria. Components of this complex are involved in the control of mitochondrial shape and protein biogenesis, and function in nonvesicular lipid trafficking between the ER and mitochondria. MDM34 is required for the interaction of the ER-resident membrane protein MMM1 and the outer mitochondrial membrane-resident beta-barrel protein MDM10. This is Mitochondrial distribution and morphology protein 34 from Lachancea thermotolerans (strain ATCC 56472 / CBS 6340 / NRRL Y-8284) (Yeast).